A 429-amino-acid polypeptide reads, in one-letter code: Glutamate-1-semialdehyde 2,1-aminomutase (429 aa).

The residue at position 264 (Lys264) is an N6-(pyridoxal phosphate)lysine.

It belongs to the class-III pyridoxal-phosphate-dependent aminotransferase family. HemL subfamily. As to quaternary structure, homodimer. Requires pyridoxal 5'-phosphate as cofactor.

The protein resides in the cytoplasm. It carries out the reaction (S)-4-amino-5-oxopentanoate = 5-aminolevulinate. It participates in porphyrin-containing compound metabolism; protoporphyrin-IX biosynthesis; 5-aminolevulinate from L-glutamyl-tRNA(Glu): step 2/2. In Campylobacter curvus (strain 525.92), this protein is Glutamate-1-semialdehyde 2,1-aminomutase.